The chain runs to 190 residues: uncharacterized protein (190 aa).

A Macro domain is found at 1–185; the sequence is MITMFKIVRG…LALETIGLGD (185 aa).

This is an uncharacterized protein from Pyrococcus horikoshii (strain ATCC 700860 / DSM 12428 / JCM 9974 / NBRC 100139 / OT-3).